Reading from the N-terminus, the 185-residue chain is Large ribosomal subunit protein bL25 (185 aa).

This sequence belongs to the bacterial ribosomal protein bL25 family. CTC subfamily. In terms of assembly, part of the 50S ribosomal subunit; part of the 5S rRNA/L5/L18/L25 subcomplex. Contacts the 5S rRNA. Binds to the 5S rRNA independently of L5 and L18.

This is one of the proteins that binds to the 5S RNA in the ribosome where it forms part of the central protuberance. This chain is Large ribosomal subunit protein bL25, found in Chlamydia muridarum (strain MoPn / Nigg).